We begin with the raw amino-acid sequence, 367 residues long: Calcium uniporter protein, mitochondrial (367 aa).

The transit peptide at Met-1–Leu-12 directs the protein to the mitochondrion. Residues Leu-13–Gln-232 lie on the Mitochondrial matrix side of the membrane. Positions Lys-61–Asp-80 are disordered. Positions Arg-199 to Val-233 form a coiled coil. The chain crosses the membrane as a helical span at residues Val-233–Phe-253. The Mitochondrial intermembrane segment spans residues Gly-254–Trp-262. The helical transmembrane segment at Glu-263–Ala-284 threads the bilayer. Positions Trp-266–Val-276 match the Selectivity filter motif. Glu-270 contacts Ca(2+). Residues Tyr-285–Glu-367 are Mitochondrial matrix-facing.

This sequence belongs to the MCU (TC 1.A.77) family. As to quaternary structure, homotetramer. Component of the uniplex complex, composed of MCU, EMRE, MICU1 and MICU2 in a 4:4:1:1 stoichiometry.

It localises to the mitochondrion inner membrane. The catalysed reaction is Ca(2+)(in) = Ca(2+)(out). With respect to regulation, MCU channel activity is regulated by the heterodimer composed of MICU1 and MICU2, which act as calcium-sensors. At low calcium levels, MICU1 occludes the pore of the MCU channel, preventing mitochondrial calcium uptake. At higher calcium levels, calcium-binding to MICU1 and MICU2 induces a conformational change that weakens MCU-MICU1 interactions and moves the MICU1-MICU2 heterodimer away from the pore, allowing calcium permeation through the channel. Channel-forming and calcium-conducting subunit of the mitochondrial inner membrane calcium uniporter complex (uniplex), which mediates calcium uptake into the mitochondrial matrix. MCU channel activity is regulated by the calcium-sensor subunits of the uniplex MICU1 and MICU2. Mitochondrial calcium homeostasis plays key roles in cellular physiology and regulates ATP production, cytoplasmic calcium signals and activation of cell death pathways. The chain is Calcium uniporter protein, mitochondrial from Tribolium castaneum (Red flour beetle).